The chain runs to 72 residues: Sperm protein associated with the nucleus on the X chromosome N1 (72 aa).

The disordered stretch occupies residues 1–40; that stretch reads MEKPTSSTNGEKRKSPCDSNSKNDEMQETPNRDLVLEPSL. The span at 10-35 shows a compositional bias: basic and acidic residues; the sequence is GEKRKSPCDSNSKNDEMQETPNRDLV.

The protein belongs to the SPAN-X family.

This chain is Sperm protein associated with the nucleus on the X chromosome N1 (SPANXN1), found in Pan troglodytes (Chimpanzee).